The following is a 216-amino-acid chain: Protein-methionine-sulfoxide reductase heme-binding subunit MsrQ (216 aa).

5 consecutive transmembrane segments (helical) span residues Ile-16–Thr-36, Glu-48–Ile-68, Ala-82–Asp-102, Phe-119–Ile-139, and Leu-155–Gly-175.

This sequence belongs to the MsrQ family. As to quaternary structure, heterodimer of a catalytic subunit (MsrP) and a heme-binding subunit (MsrQ). The cofactor is FMN. Heme b is required as a cofactor.

The protein resides in the cell inner membrane. In terms of biological role, part of the MsrPQ system that repairs oxidized periplasmic proteins containing methionine sulfoxide residues (Met-O), using respiratory chain electrons. Thus protects these proteins from oxidative-stress damage caused by reactive species of oxygen and chlorine generated by the host defense mechanisms. MsrPQ is essential for the maintenance of envelope integrity under bleach stress, rescuing a wide series of structurally unrelated periplasmic proteins from methionine oxidation. MsrQ provides electrons for reduction to the reductase catalytic subunit MsrP, using the quinone pool of the respiratory chain. The sequence is that of Protein-methionine-sulfoxide reductase heme-binding subunit MsrQ from Rhizobium meliloti (strain 1021) (Ensifer meliloti).